The chain runs to 191 residues: Fe/S biogenesis protein NfuA (191 aa).

C149 and C152 together coordinate [4Fe-4S] cluster.

This sequence belongs to the NfuA family. Homodimer. [4Fe-4S] cluster serves as cofactor.

Functionally, involved in iron-sulfur cluster biogenesis. Binds a 4Fe-4S cluster, can transfer this cluster to apoproteins, and thereby intervenes in the maturation of Fe/S proteins. Could also act as a scaffold/chaperone for damaged Fe/S proteins. This chain is Fe/S biogenesis protein NfuA, found in Sodalis glossinidius (strain morsitans).